A 406-amino-acid polypeptide reads, in one-letter code: Serine/threonine transporter SstT (406 aa).

The next 9 membrane-spanning stretches (helical) occupy residues leucine 21–leucine 41, phenylalanine 45–isoleucine 65, isoleucine 79–phenylalanine 99, alanine 138–leucine 158, valine 179–isoleucine 199, leucine 213–valine 233, isoleucine 285–leucine 305, leucine 313–alanine 333, and isoleucine 360–threonine 380.

The protein belongs to the dicarboxylate/amino acid:cation symporter (DAACS) (TC 2.A.23) family.

It is found in the cell membrane. It catalyses the reaction L-serine(in) + Na(+)(in) = L-serine(out) + Na(+)(out). The catalysed reaction is L-threonine(in) + Na(+)(in) = L-threonine(out) + Na(+)(out). Its function is as follows. Involved in the import of serine and threonine into the cell, with the concomitant import of sodium (symport system). In Desulfitobacterium hafniense (strain Y51), this protein is Serine/threonine transporter SstT.